The sequence spans 1435 residues: DNA polymerase III PolC-type (1435 aa).

The 157-residue stretch at 420–576 (YVVFDVETTG…YDTEATGYLL (157 aa)) folds into the Exonuclease domain.

This sequence belongs to the DNA polymerase type-C family. PolC subfamily.

Its subcellular location is the cytoplasm. The enzyme catalyses DNA(n) + a 2'-deoxyribonucleoside 5'-triphosphate = DNA(n+1) + diphosphate. Functionally, required for replicative DNA synthesis. This DNA polymerase also exhibits 3' to 5' exonuclease activity. This chain is DNA polymerase III PolC-type, found in Bacillus cereus (strain ATCC 14579 / DSM 31 / CCUG 7414 / JCM 2152 / NBRC 15305 / NCIMB 9373 / NCTC 2599 / NRRL B-3711).